The chain runs to 155 residues: MYTITKGPSKLVAQRRTGPTQQQVESRLGELLKCRHSAPTPQHPRAQPPGPWPLSSPGPRLVFNRVNGRRPPATSPSLEGTQEPYTLAHEENVRFVSEAWQQVEQQLGGGPAGESGPRPVQYVERTPNPRLQNFVPIDLDEWWAQQFLARITSCS.

Met1 carries the N-acetylmethionine modification. A disordered region spans residues 1–59 (MYTITKGPSKLVAQRRTGPTQQQVESRLGELLKCRHSAPTPQHPRAQPPGPWPLSSPGP). Arg35 carries the omega-N-methylarginine modification. The segment covering 46-56 (AQPPGPWPLSS) has biased composition (pro residues). The residue at position 56 (Ser56) is a Phosphoserine. The residue at position 60 (Arg60) is an Omega-N-methylarginine. Ser77 is subject to Phosphoserine.

This sequence belongs to the MCRIP family. Interacts with DDX6. Interacts with MCRIP1.

It localises to the cytoplasm. The protein localises to the stress granule. It is found in the nucleus. In Bos taurus (Bovine), this protein is MAPK regulated corepressor interacting protein 2 (MCRIP2).